We begin with the raw amino-acid sequence, 342 residues long: Alpha-tocopherol transfer protein-like (342 aa).

Residues 1-31 form a disordered region; sequence MSEESDSLRTSPSVASLSENELPPPPEPPGY. The span at 8-19 shows a compositional bias: polar residues; the sequence is LRTSPSVASLSE. The CRAL-TRIO domain occupies 117-282; the sequence is KPSALKDVLA…EYGGTAGELD (166 aa).

May act as a protein that binds a hydrophobic ligand. This chain is Alpha-tocopherol transfer protein-like (TTPAL), found in Pongo abelii (Sumatran orangutan).